The following is a 467-amino-acid chain: ADP-dependent glucose/glucosamine kinase (467 aa).

The ADPK domain maps to 10–467; that stretch reads RLWKRLYVNA…FVSEFGMRKR (458 aa). Residues aspartate 42, glutamate 96, glycine 120, 120–121, histidine 184, and aspartate 211 each bind D-glucose; that span reads GQ. Glutamate 279 contributes to the Mg(2+) binding site. Asparagine 305 contributes to the ADP binding site. Glutamate 308 serves as a coordination point for Mg(2+). Residues 352–353, valine 440, and glycine 450 contribute to the ADP site; that span reads HT. Residue aspartate 451 coordinates D-glucose. Aspartate 451 lines the Mg(2+) pocket. The Proton acceptor role is filled by aspartate 451.

It belongs to the ADP-dependent glucokinase family. In terms of assembly, monomer. Mg(2+) is required as a cofactor.

The protein resides in the cytoplasm. It catalyses the reaction D-glucose + ADP = D-glucose 6-phosphate + AMP + H(+). The catalysed reaction is D-glucosamine + ADP = D-glucosamine 6-phosphate + AMP + H(+). It participates in carbohydrate degradation; glycolysis. Its function is as follows. Catalyzes the ADP-dependent phosphorylation of D-glucose to D-glucose 6-phosphate and glucosamine to glucosamine 6-phosphate. Can also use CDP as the phosphoryl group donor and D-1,5-anhydroglucitol as the phosphoryl group acceptor. The chain is ADP-dependent glucose/glucosamine kinase from Thermococcus litoralis (strain ATCC 51850 / DSM 5473 / JCM 8560 / NS-C).